Here is a 118-residue protein sequence, read N- to C-terminus: Large ribosomal subunit protein bL20 (118 aa).

It belongs to the bacterial ribosomal protein bL20 family.

Its function is as follows. Binds directly to 23S ribosomal RNA and is necessary for the in vitro assembly process of the 50S ribosomal subunit. It is not involved in the protein synthesizing functions of that subunit. This Sulfurihydrogenibium sp. (strain YO3AOP1) protein is Large ribosomal subunit protein bL20.